The following is a 634-amino-acid chain: tRNA uridine 5-carboxymethylaminomethyl modification enzyme MnmG (634 aa).

14-19 provides a ligand contact to FAD; the sequence is GGGHAG. 279-293 lines the NAD(+) pocket; the sequence is GPRYCPSIEDKVVRF.

Belongs to the MnmG family. As to quaternary structure, homodimer. Heterotetramer of two MnmE and two MnmG subunits. It depends on FAD as a cofactor.

Its subcellular location is the cytoplasm. In terms of biological role, NAD-binding protein involved in the addition of a carboxymethylaminomethyl (cmnm) group at the wobble position (U34) of certain tRNAs, forming tRNA-cmnm(5)s(2)U34. This Xanthomonas campestris pv. campestris (strain 8004) protein is tRNA uridine 5-carboxymethylaminomethyl modification enzyme MnmG.